A 279-amino-acid chain; its full sequence is NADPH-dependent 7-cyano-7-deazaguanine reductase (279 aa).

86 to 88 lines the substrate pocket; sequence IES. 88 to 89 contacts NADPH; the sequence is SK. Residue Cys-187 is the Thioimide intermediate of the active site. Catalysis depends on Asp-194, which acts as the Proton donor. 226-227 is a binding site for substrate; the sequence is HE. 255 to 256 is a binding site for NADPH; the sequence is RG.

This sequence belongs to the GTP cyclohydrolase I family. QueF type 2 subfamily. As to quaternary structure, homodimer.

It localises to the cytoplasm. It carries out the reaction 7-aminomethyl-7-carbaguanine + 2 NADP(+) = 7-cyano-7-deazaguanine + 2 NADPH + 3 H(+). The protein operates within tRNA modification; tRNA-queuosine biosynthesis. Functionally, catalyzes the NADPH-dependent reduction of 7-cyano-7-deazaguanine (preQ0) to 7-aminomethyl-7-deazaguanine (preQ1). The protein is NADPH-dependent 7-cyano-7-deazaguanine reductase of Actinobacillus pleuropneumoniae serotype 3 (strain JL03).